A 212-amino-acid polypeptide reads, in one-letter code: Putative 3-methyladenine DNA glycosylase (212 aa).

This sequence belongs to the DNA glycosylase MPG family.

The sequence is that of Putative 3-methyladenine DNA glycosylase from Frankia casuarinae (strain DSM 45818 / CECT 9043 / HFP020203 / CcI3).